A 226-amino-acid polypeptide reads, in one-letter code: MKAIKIAIDGPASSGKSTVAKIIAKNLGYTYLDTGAMYRSATYIALTHGYTDKEVALILEELEKNPISFKKAKGGSQLVFLGDEDVTLAIRQNDVTNNVSWVSALPEIREELVHQQRRIAQAGGIIMDGRDIGTVVLPDAELKIFLVASVEERAERRYKENLEKGIESDFETLKEEIAARDYKDSHRKVSPLKAAEDALIFDTTGVSIDGVVQFIQEKAEKIVDMS.

10 to 18 serves as a coordination point for ATP; the sequence is GPASSGKST.

Belongs to the cytidylate kinase family. Type 1 subfamily.

It is found in the cytoplasm. It catalyses the reaction CMP + ATP = CDP + ADP. The catalysed reaction is dCMP + ATP = dCDP + ADP. The chain is Cytidylate kinase from Streptococcus pyogenes serotype M18 (strain MGAS8232).